A 283-amino-acid polypeptide reads, in one-letter code: MNQETHDKTPRTHGMDISLIERGVKKLKLKDETCCLQVKQFNFYYNQHTQALKSINLIIPERRVTAFIGPSGCGKSTLLRCFNRMNDLIDGARIEGEMLLNKQDIYGKNVNVSDLRRRVGMVFQKPNPFPKSIYENVAYGLRLQGVKSRRTLDKVVEKSLRSAALWDEVKDRLDDNAVGLSGGQQQRLVIARAIAIEPEVLLLDEPASALDPISTLKIEELIYDLKDKYTIVIVTHNMQQAARVSDYTAFMYLGELIEFGDTGTLFTNPKKKQTEDYITGRYG.

The 243-residue stretch at 36 to 278 (LQVKQFNFYY…PKKKQTEDYI (243 aa)) folds into the ABC transporter domain. 69-76 (GPSGCGKS) provides a ligand contact to ATP.

Belongs to the ABC transporter superfamily. Phosphate importer (TC 3.A.1.7) family. As to quaternary structure, the complex is composed of two ATP-binding proteins (PstB), two transmembrane proteins (PstC and PstA) and a solute-binding protein (PstS).

It is found in the cell inner membrane. The enzyme catalyses phosphate(out) + ATP + H2O = ADP + 2 phosphate(in) + H(+). Its function is as follows. Part of the ABC transporter complex PstSACB involved in phosphate import. Responsible for energy coupling to the transport system. This is Phosphate import ATP-binding protein PstB 2 from Nitrosococcus oceani (strain ATCC 19707 / BCRC 17464 / JCM 30415 / NCIMB 11848 / C-107).